A 317-amino-acid polypeptide reads, in one-letter code: MTIDCHEDRRVLLVPHTGRPQNVASAALAAELLDDSGVGVRVLVPAEDTTVATHPVLGQFERVSHSPQATQSVDLVLVLGGDGTFLRAADLAHGADLPVLGINLGHVGFLAEWEKDSLDEAVRRVTKGSFRIEERMTLDVSVYDSNGTAIGRGWALNEVSIENSNRSGVLDATLEIDSRPVSSFGCDGIIVSTPTGSTAYAFSAGGPVLWPELDAILVVPNNAHALFTKPLVVSPRSSVAVESHPSAFPATAVMDGFRSISVPPGARVEVKRGSRSIKWVRLDDIPFTDRLVTKLRLPVEGWRGPKNMIPQINPHSA.

Residue aspartate 82 is the Proton acceptor of the active site. NAD(+) is bound by residues 82 to 83, arginine 87, 157 to 158, aspartate 187, and 198 to 203; these read DG, NE, and TAYAFS.

The protein belongs to the NAD kinase family. Requires a divalent metal cation as cofactor.

It localises to the cytoplasm. It catalyses the reaction NAD(+) + ATP = ADP + NADP(+) + H(+). In terms of biological role, involved in the regulation of the intracellular balance of NAD and NADP, and is a key enzyme in the biosynthesis of NADP. Catalyzes specifically the phosphorylation on 2'-hydroxyl of the adenosine moiety of NAD to yield NADP. The protein is NAD kinase of Corynebacterium diphtheriae (strain ATCC 700971 / NCTC 13129 / Biotype gravis).